The chain runs to 348 residues: MSVPSKTQKPFLQALAGETLSPPPVWLMRQAGRYLPEYRATREEAGGFLDLCYTPKLAVEVTLQPLRRYAFDAAILFSDILVVPNAIGRQVAFKQGEGPVLDPLTSRADVEALEPGKLRERLGPVFETVRGLASAIPSTTALIGFAGAPWTVATYMLEGGSSKDFSVAKSWIYSRPDDFAALMEVLISATTDYLIAQIDAGAEAIQIFDTWAGVLPETEFHRWVIEPIGRITRALHEQRPGVPVIGFPKGAGVLYETFIRETGVDGVGLDASVPLAWAAKTLQPLCTVQGNMDPLLLVEGGPLMEQAVKRLLDTLGHGPFIFNLGHGIVPQTPPENVARLIDLVRAPR.

Substrate is bound by residues 29–33, Asp79, Tyr155, Thr210, and His326; that span reads RQAGR.

It belongs to the uroporphyrinogen decarboxylase family. As to quaternary structure, homodimer.

The protein resides in the cytoplasm. The enzyme catalyses uroporphyrinogen III + 4 H(+) = coproporphyrinogen III + 4 CO2. The protein operates within porphyrin-containing compound metabolism; protoporphyrin-IX biosynthesis; coproporphyrinogen-III from 5-aminolevulinate: step 4/4. Functionally, catalyzes the decarboxylation of four acetate groups of uroporphyrinogen-III to yield coproporphyrinogen-III. In Rhodospirillum rubrum (strain ATCC 11170 / ATH 1.1.1 / DSM 467 / LMG 4362 / NCIMB 8255 / S1), this protein is Uroporphyrinogen decarboxylase.